The primary structure comprises 161 residues: Small ribosomal subunit protein uS9 (161 aa).

It belongs to the universal ribosomal protein uS9 family.

The sequence is that of Small ribosomal subunit protein uS9 from Rickettsia typhi (strain ATCC VR-144 / Wilmington).